A 278-amino-acid polypeptide reads, in one-letter code: Sulfate transport system permease protein CysT (278 aa).

7 helical membrane-spanning segments follow: residues Phe-22–Ser-42, Phe-67–Val-87, Phe-102–Tyr-122, Ile-139–Val-159, Phe-188–Phe-208, Ser-217–Phe-237, and Ala-246–Ile-266. The ABC transmembrane type-1 domain occupies Tyr-63–Ile-266.

This sequence belongs to the binding-protein-dependent transport system permease family. CysTW subfamily. As to quaternary structure, the complex is composed of two ATP-binding proteins (CysA), two transmembrane proteins (CysT and CysW) and a solute-binding protein (CysP).

It is found in the cell inner membrane. Part of the ABC transporter complex CysAWTP (TC 3.A.1.6.1) involved in sulfate/thiosulfate import. Probably responsible for the translocation of the substrate across the membrane. This chain is Sulfate transport system permease protein CysT (cysT), found in Synechococcus elongatus (strain ATCC 33912 / PCC 7942 / FACHB-805) (Anacystis nidulans R2).